The sequence spans 185 residues: Ribosome-recycling factor (185 aa).

This sequence belongs to the RRF family.

It is found in the cytoplasm. Its function is as follows. Responsible for the release of ribosomes from messenger RNA at the termination of protein biosynthesis. May increase the efficiency of translation by recycling ribosomes from one round of translation to another. The chain is Ribosome-recycling factor from Streptococcus equi subsp. equi (strain 4047).